The sequence spans 354 residues: Glutamine synthetase (354 aa).

Positions 22–101 (VQAEYVWIDG…VLAETFNNDG (80 aa)) constitute a GS beta-grasp domain. One can recognise a GS catalytic domain in the interval 108–354 (HRHHTKKVMD…IIVETTVLDK (247 aa)).

This sequence belongs to the glutamine synthetase family. Homooctamer.

The protein resides in the cytoplasm. It carries out the reaction L-glutamate + NH4(+) + ATP = L-glutamine + ADP + phosphate + H(+). This Suillus bovinus (Jersey cow bolete) protein is Glutamine synthetase (GLNA).